Reading from the N-terminus, the 52-residue chain is Rubredoxin (52 aa).

A Rubredoxin-like domain is found at 1–51; the sequence is MDKYECSICGYIYDEAEGDDGNVAAGTKFADLPADWVCPTCGADKDAFVKM. Residues cysteine 6, cysteine 9, cysteine 38, and cysteine 41 each contribute to the Fe cation site.

This sequence belongs to the rubredoxin family. It depends on Fe(3+) as a cofactor.

Functionally, rubredoxin is a small nonheme, iron protein lacking acid-labile sulfide. Its single Fe, chelated to 4 Cys, functions as an electron acceptor and may also stabilize the conformation of the molecule. This chain is Rubredoxin, found in Megasphaera elsdenii.